The sequence spans 87 residues: Small ribosomal subunit protein uS17 (87 aa).

It belongs to the universal ribosomal protein uS17 family. In terms of assembly, part of the 30S ribosomal subunit.

Functionally, one of the primary rRNA binding proteins, it binds specifically to the 5'-end of 16S ribosomal RNA. The protein is Small ribosomal subunit protein uS17 of Lacticaseibacillus casei (strain BL23) (Lactobacillus casei).